The following is a 589-amino-acid chain: Phenylalanine--tRNA ligase beta subunit (589 aa).

The 78-residue stretch at 302–379 (LAYRKEMVRA…IAYGYNNIQM (78 aa)) folds into the B5 domain. Mg(2+) is bound by residues Asp-357, Asp-363, Glu-366, and Asp-367.

Belongs to the phenylalanyl-tRNA synthetase beta subunit family. Type 2 subfamily. Heterotetramer; dimer of two heterodimers formed by FARSA and FARSB. Mg(2+) is required as a cofactor.

It localises to the cytoplasm. The catalysed reaction is tRNA(Phe) + L-phenylalanine + ATP = L-phenylalanyl-tRNA(Phe) + AMP + diphosphate + H(+). The protein is Phenylalanine--tRNA ligase beta subunit (FARSB) of Homo sapiens (Human).